We begin with the raw amino-acid sequence, 471 residues long: Putative multidrug resistance protein MdtD (471 aa).

Residues 1–11 lie on the Periplasmic side of the membrane; it reads MTDLPDSTRWQ. A helical membrane pass occupies residues 12–32; that stretch reads LWIVAFGFFMQSLDTTIVNTA. Residues 33–48 are Cytoplasmic-facing; sequence LPSMAQSLGESPLHMH. The helical transmembrane segment at 49–69 threads the bilayer; that stretch reads MVIVSYVLTVAVMLPASGWLA. The Periplasmic portion of the chain corresponds to 70–76; that stretch reads DKVGVRN. A helical membrane pass occupies residues 77 to 97; that stretch reads IFFTAIVLFTLGSLFCALSGT. The Cytoplasmic segment spans residues 98–101; that stretch reads LNEL. A helical transmembrane segment spans residues 102 to 124; the sequence is LLARALQGVGGAMMVPVGRLTVM. At 125-137 the chain is on the periplasmic side; that stretch reads KIVPREQYMAAMT. Residues 138-158 traverse the membrane as a helical segment; the sequence is FVTLPGQVGPLLGPALGGLLV. Topologically, residues 159-164 are cytoplasmic; the sequence is EYASWH. The chain crosses the membrane as a helical span at residues 165–185; sequence WIFLINIPVGIIGAIATLMLM. Residues 186–196 are Periplasmic-facing; sequence PNYTMQTRRFD. The chain crosses the membrane as a helical span at residues 197 to 217; it reads LSGFLLLAVGMAVLTLALDGS. Topologically, residues 218–224 are cytoplasmic; that stretch reads KGTGLSP. A helical membrane pass occupies residues 225–245; sequence LTIDGLVAVGVVALVLYLLHA. The Periplasmic portion of the chain corresponds to 246-262; it reads RNNNRALFSLKLFRTRT. Residues 263-283 form a helical membrane-spanning segment; the sequence is FSLGLAGSFAGRIGSGMLPFM. Over 284 to 285 the chain is Cytoplasmic; that stretch reads TP. A helical membrane pass occupies residues 286-306; the sequence is VFLQIGLGFSPFHAGLMMIPM. The Periplasmic portion of the chain corresponds to 307-341; sequence VLGSMGMKRIVVQVVNRFGYRRVLVATTLGLSLVT. A helical membrane pass occupies residues 342-362; sequence LLFMTTALLGWYYVLPFVLFL. The Cytoplasmic segment spans residues 363–395; the sequence is QGMVNSTRFSSMNTLTLKDLPDNLASSGNSLLS. A helical membrane pass occupies residues 396-416; it reads MIMQLSMSIGVTIAGLLLGLF. Over 417–430 the chain is Periplasmic; sequence GSQHVSVDSGTTQT. Residues 431–451 traverse the membrane as a helical segment; that stretch reads VFMYTWLSMAFIIALPAFIFA. At 452 to 471 the chain is on the cytoplasmic side; the sequence is RVPNDTHQNVAISRRKRSAQ.

Belongs to the major facilitator superfamily. TCR/Tet family.

The protein localises to the cell inner membrane. The chain is Putative multidrug resistance protein MdtD from Escherichia coli O8 (strain IAI1).